The sequence spans 456 residues: tRNA-2-methylthio-N(6)-dimethylallyladenosine synthase (456 aa).

The 119-residue stretch at 19 to 137 folds into the MTTase N-terminal domain; sequence KHFFIETWGC…FPEYLHRVQV (119 aa). Positions 28, 64, 98, 174, 178, and 181 each coordinate [4Fe-4S] cluster. A Radical SAM core domain is found at 160 to 392; sequence RKSNVKAFVT…AVNEGIVVGN (233 aa). One can recognise a TRAM domain in the interval 393-456; that stretch reads KAAEGKIYEV…SFSLVGEVVE (64 aa).

The protein belongs to the methylthiotransferase family. MiaB subfamily. Monomer. Requires [4Fe-4S] cluster as cofactor.

The protein resides in the cytoplasm. The enzyme catalyses N(6)-dimethylallyladenosine(37) in tRNA + (sulfur carrier)-SH + AH2 + 2 S-adenosyl-L-methionine = 2-methylsulfanyl-N(6)-dimethylallyladenosine(37) in tRNA + (sulfur carrier)-H + 5'-deoxyadenosine + L-methionine + A + S-adenosyl-L-homocysteine + 2 H(+). In terms of biological role, catalyzes the methylthiolation of N6-(dimethylallyl)adenosine (i(6)A), leading to the formation of 2-methylthio-N6-(dimethylallyl)adenosine (ms(2)i(6)A) at position 37 in tRNAs that read codons beginning with uridine. The chain is tRNA-2-methylthio-N(6)-dimethylallyladenosine synthase from Clostridium botulinum (strain Eklund 17B / Type B).